We begin with the raw amino-acid sequence, 441 residues long: Plasmepsin VI (441 aa).

At 1 to 7 the chain is on the cytoplasmic side; that stretch reads MTNFCIK. The helical; Signal-anchor for type II membrane protein transmembrane segment at 8-28 threads the bilayer; it reads SYLFLYLSFLLFFDIITIFHV. The Extracellular segment spans residues 29-441; the sequence is SSIRISTVLK…VGVVKSNHNF (413 aa). Residues 109 to 435 form the Peptidase A1 domain; it reads FIGDIEIGNP…DNDHKLVGVV (327 aa). Residues Asp127 and Asp324 contribute to the active site.

It belongs to the peptidase A1 family.

Its subcellular location is the membrane. During the development in the mosquito midgut, plays a role in sporozoite egress from oocysts. The protein is Plasmepsin VI of Plasmodium berghei (strain Anka).